The chain runs to 82 residues: Small ribosomal subunit protein bS16 (82 aa).

Belongs to the bacterial ribosomal protein bS16 family.

This is Small ribosomal subunit protein bS16 from Pectobacterium atrosepticum (strain SCRI 1043 / ATCC BAA-672) (Erwinia carotovora subsp. atroseptica).